The sequence spans 968 residues: uncharacterized protein (968 aa).

Residues 1–27 form the signal peptide; sequence MHSWKKKLVVSQLALACTLAITSQANA. In terms of domain architecture, Autotransporter spans 703–968; sequence GLADNGGAWV…SANVGVKYTW (266 aa).

This is an uncharacterized protein from Escherichia coli (strain K12).